Consider the following 364-residue polypeptide: Caveolae-associated protein 4 (364 aa).

Residues 1-24 (MEHNGSASNADKIHQNRLSSVTED) are disordered. Positions 44 to 77 (VDSVQASQKRIEERHREMENAIKSVQIDLLKLSQ) form a coiled coil. A phosphoserine mark is found at S172 and S173. Residues 202–226 (FSKENMQKTRQNLDKKVNRIRTRIV) are a coiled coil. Over residues 231-256 (RERLRQSGERLRQSGERLRQSGERFK) the composition is skewed to basic and acidic residues. 2 disordered regions span residues 231–283 (RERL…RTVA) and 311–339 (SDEL…TPEP). Residue Y326 is modified to Phosphotyrosine. A Phosphothreonine modification is found at T336. At S355 the chain carries Phosphoserine.

This sequence belongs to the CAVIN family. In terms of assembly, component of the CAVIN complex composed of CAVIN1, CAVIN2, CAVIN3 and CAVIN4. Interacts with CAVIN1, ADRA1A and ADRA1B. Interacts with CAVIN2; this augments the transactivation of NPPA. Interacts with CAV3. Interacts with MAPK1 and MAPK3.

The protein resides in the cytoplasm. Its subcellular location is the myofibril. It localises to the sarcomere. It is found in the cytosol. The protein localises to the cell membrane. The protein resides in the sarcolemma. Its subcellular location is the membrane. It localises to the caveola. Functionally, modulates the morphology of formed caveolae in cardiomyocytes, but is not required for caveolar formation. Facilitates the recruitment of MAPK1/3 to caveolae within cardiomyocytes and regulates alpha-1 adrenergic receptor-induced hypertrophic responses in cardiomyocytes through MAPK1/3 activation. Contributes to proper membrane localization and stabilization of caveolin-3 (CAV3) in cardiomyocytes. Induces RHOA activation and activates NPPA transcription and myofibrillar organization through the Rho/ROCK signaling pathway. This chain is Caveolae-associated protein 4, found in Homo sapiens (Human).